A 220-amino-acid chain; its full sequence is 3-dehydroquinate dehydratase (220 aa).

3-dehydroquinate-binding positions include Glu29–Arg31 and Arg56. His116 functions as the Proton donor/acceptor in the catalytic mechanism. The Schiff-base intermediate with substrate role is filled by Lys142. Arg180, Ser200, and Gln204 together coordinate 3-dehydroquinate.

Belongs to the type-I 3-dehydroquinase family. As to quaternary structure, homodimer.

The enzyme catalyses 3-dehydroquinate = 3-dehydroshikimate + H2O. Its pathway is metabolic intermediate biosynthesis; chorismate biosynthesis; chorismate from D-erythrose 4-phosphate and phosphoenolpyruvate: step 3/7. Its function is as follows. Involved in the third step of the chorismate pathway, which leads to the biosynthesis of aromatic amino acids. Catalyzes the cis-dehydration of 3-dehydroquinate (DHQ) and introduces the first double bond of the aromatic ring to yield 3-dehydroshikimate. In Methanocaldococcus jannaschii (strain ATCC 43067 / DSM 2661 / JAL-1 / JCM 10045 / NBRC 100440) (Methanococcus jannaschii), this protein is 3-dehydroquinate dehydratase.